We begin with the raw amino-acid sequence, 63 residues long: Male-specific sperm protein Mst84Da (63 aa).

Belongs to the MST(3)CGP family. Testis.

This Drosophila melanogaster (Fruit fly) protein is Male-specific sperm protein Mst84Da (Mst84Da).